The sequence spans 429 residues: Enolase (429 aa).

Residue Q163 participates in (2R)-2-phosphoglycerate binding. E205 functions as the Proton donor in the catalytic mechanism. D242, E285, and D312 together coordinate Mg(2+). 4 residues coordinate (2R)-2-phosphoglycerate: K337, R366, S367, and K388. The active-site Proton acceptor is the K337.

This sequence belongs to the enolase family. Mg(2+) serves as cofactor.

The protein resides in the cytoplasm. The protein localises to the secreted. It is found in the cell surface. It catalyses the reaction (2R)-2-phosphoglycerate = phosphoenolpyruvate + H2O. Its pathway is carbohydrate degradation; glycolysis; pyruvate from D-glyceraldehyde 3-phosphate: step 4/5. Its function is as follows. Catalyzes the reversible conversion of 2-phosphoglycerate (2-PG) into phosphoenolpyruvate (PEP). It is essential for the degradation of carbohydrates via glycolysis. The sequence is that of Enolase from Methylorubrum extorquens (strain CM4 / NCIMB 13688) (Methylobacterium extorquens).